A 349-amino-acid polypeptide reads, in one-letter code: Cobalt-precorrin-5B C(1)-methyltransferase (349 aa).

This sequence belongs to the CbiD family.

The enzyme catalyses Co-precorrin-5B + S-adenosyl-L-methionine = Co-precorrin-6A + S-adenosyl-L-homocysteine. The protein operates within cofactor biosynthesis; adenosylcobalamin biosynthesis; cob(II)yrinate a,c-diamide from sirohydrochlorin (anaerobic route): step 6/10. In terms of biological role, catalyzes the methylation of C-1 in cobalt-precorrin-5B to form cobalt-precorrin-6A. The chain is Cobalt-precorrin-5B C(1)-methyltransferase from Saccharolobus islandicus (strain M.16.27) (Sulfolobus islandicus).